The following is an 863-amino-acid chain: MNLPEHGGNLIELSKKAGCNPKEILDFSANINPLGFPEWLRPFLHSKIEDLISYPDPNYTSLKKKIHSKYGICTEQIVLGNGASELILQIPFVVQADYALIAVPCYSGYKEAISLLKIPCIEVTLKEEKQFRLDINELRDVLKSKPDQKALVFLGHPNNPTGVTLDKIEVLKIVQEFQNSVFVIDESFIHFCTNESSFLKDKTENMILIQSMTKILALPGLRIGICYASPLICSNISKRLPTWNVNSIAASVYEKAISDEDYIENSKQNIKIWKEKLIYDLSNLEFLNLFSSEANFILIKILDNKNIFDLTQELLIKYKIAVRNCENFSGLSKNFIRIAVRTPEENKKIIDAFSNIFYGTRQRLKSRKKTPSIMFQGTASNVGKSILTAALCRILSQDGIKVAPFKSQNMALNSFVTLNGEEIGRAQALQAQAAKILPDIRMNPILLKPSNEKDSQVIINGKPLNSMNFKDYDQYKPIAFEEVKKSYDSLASEYNVIIIEGAGSASEVNLKKNDIVNMKMAEYAKADVLLVGNIDHGGLFGSLLGTMETLTEWERKLVFGFIINRFRGAKELLKTGINYIEEYTNKPILGIVPYIKNLKLPEEDSLEFKSGALDDTSKLEERLDVVLIDIPRISNHTDIDALRAEPDVRVRIVRTVEDLGEPDVLILPGSKNVISDLNHLYDVGLVNKIFALSRNQKTDIVGICGGYQMLGKNIFDPYRIESDQGSIQGISLLQIETILEKNKSLKRVFATHIPTKTEVEGYEIHHGKTKSIGNTRVILLNEKAEELGHSDPTGRIWGTYIHGIFDKDEFRRKYLDQIRIRKGKSPLVKVQVSYNLEKSLDRLARYVRQSLNINLIYRKLGLG.

The interval M1–I373 is putative threonine-phosphate decarboxylase. O-phospho-L-threonine is bound by residues H6 to G7, N30, and N159. Position 214 is an N6-(pyridoxal phosphate)lysine (K214). Residues R323 and R337 each coordinate O-phospho-L-threonine. The segment at M374–G863 is cobyric acid synthase. Residues R622–F810 enclose the GATase cobBQ-type domain. The active-site Nucleophile is C704. Residue H802 is part of the active site.

This sequence in the N-terminal section; belongs to the class-II pyridoxal-phosphate-dependent aminotransferase family. In the C-terminal section; belongs to the CobB/CobQ family. CobQ subfamily. Pyridoxal 5'-phosphate is required as a cofactor.

It catalyses the reaction O-phospho-L-threonine + H(+) = (R)-1-aminopropan-2-yl phosphate + CO2. It participates in cofactor biosynthesis; adenosylcobalamin biosynthesis. Functionally, catalyzes two activities which are involved in the adenosylcobalamin biosynthesis: decarboxylates L-threonine-O-3-phosphate to yield (R)-1-amino-2-propanol O-2-phosphate, the precursor for the linkage between the nucleotide loop and the corrin ring in cobalamin, and catalyzes amidations at positions B, D, E, and G on adenosylcobyrinic A,C-diamide. NH(2) groups are provided by glutamine, and one molecule of ATP is hydrogenolyzed for each amidation. The protein is Adenosylcobalamin biosynthesis bifunctional protein CobDQ (cobDQ) of Leptospira interrogans serogroup Icterohaemorrhagiae serovar Lai (strain 56601).